Consider the following 485-residue polypeptide: Zinc finger protein 165 (485 aa).

Lys23 is covalently cross-linked (Glycyl lysine isopeptide (Lys-Gly) (interchain with G-Cter in SUMO2)). One can recognise an SCAN box domain in the interval 62–127; it reads GPREALSRLR…EEAVTILEDL (66 aa). Glycyl lysine isopeptide (Lys-Gly) (interchain with G-Cter in SUMO2) cross-links involve residues Lys162 and Lys195. The C2H2-type 1; degenerate zinc-finger motif lies at 290–314; that stretch reads KSCKHGTCDQSFKWNSDFINHQIIY. 5 C2H2-type zinc fingers span residues 344–366, 372–394, 400–422, 428–450, and 456–478; these read HQCN…QRIH, YECN…RRIH, FGCK…QRIH, YECS…FRIH, and YECS…QRIH.

Belongs to the krueppel C2H2-type zinc-finger protein family. Expressed specifically in testis.

It localises to the nucleus. Its function is as follows. May be involved in transcriptional regulation. The sequence is that of Zinc finger protein 165 (ZNF165) from Homo sapiens (Human).